Reading from the N-terminus, the 120-residue chain is NAD(P)H-quinone oxidoreductase subunit 3, chloroplastic (120 aa).

The next 3 membrane-spanning stretches (helical) occupy residues 9 to 29, 64 to 84, and 88 to 108; these read IFWA…LISG, MFAL…PWAM, and VLGV…IVGS.

It belongs to the complex I subunit 3 family. In terms of assembly, NDH is composed of at least 16 different subunits, 5 of which are encoded in the nucleus.

The protein resides in the plastid. It localises to the chloroplast thylakoid membrane. The enzyme catalyses a plastoquinone + NADH + (n+1) H(+)(in) = a plastoquinol + NAD(+) + n H(+)(out). It catalyses the reaction a plastoquinone + NADPH + (n+1) H(+)(in) = a plastoquinol + NADP(+) + n H(+)(out). NDH shuttles electrons from NAD(P)H:plastoquinone, via FMN and iron-sulfur (Fe-S) centers, to quinones in the photosynthetic chain and possibly in a chloroplast respiratory chain. The immediate electron acceptor for the enzyme in this species is believed to be plastoquinone. Couples the redox reaction to proton translocation, and thus conserves the redox energy in a proton gradient. This Platanus occidentalis (Sycamore) protein is NAD(P)H-quinone oxidoreductase subunit 3, chloroplastic.